The sequence spans 123 residues: Small ribosomal subunit protein uS12 (123 aa).

Aspartate 89 carries the 3-methylthioaspartic acid modification. The tract at residues 100–123 (GSLDTSGVSDRKQGRSKYGTKRPK) is disordered. A compositionally biased stretch (basic residues) spans 113 to 123 (GRSKYGTKRPK).

The protein belongs to the universal ribosomal protein uS12 family. As to quaternary structure, part of the 30S ribosomal subunit. Contacts proteins S8 and S17. May interact with IF1 in the 30S initiation complex.

Functionally, with S4 and S5 plays an important role in translational accuracy. Interacts with and stabilizes bases of the 16S rRNA that are involved in tRNA selection in the A site and with the mRNA backbone. Located at the interface of the 30S and 50S subunits, it traverses the body of the 30S subunit contacting proteins on the other side and probably holding the rRNA structure together. The combined cluster of proteins S8, S12 and S17 appears to hold together the shoulder and platform of the 30S subunit. In Saccharophagus degradans (strain 2-40 / ATCC 43961 / DSM 17024), this protein is Small ribosomal subunit protein uS12.